Here is a 387-residue protein sequence, read N- to C-terminus: Chorismate synthase (387 aa).

NADP(+) is bound by residues Arg-40 and Arg-46. Residues 129–131, 250–251, Gly-295, 310–314, and Arg-336 contribute to the FMN site; these read RSS, QA, and KPIPT.

This sequence belongs to the chorismate synthase family. As to quaternary structure, homotetramer. FMNH2 serves as cofactor.

The catalysed reaction is 5-O-(1-carboxyvinyl)-3-phosphoshikimate = chorismate + phosphate. Its pathway is metabolic intermediate biosynthesis; chorismate biosynthesis; chorismate from D-erythrose 4-phosphate and phosphoenolpyruvate: step 7/7. Functionally, catalyzes the anti-1,4-elimination of the C-3 phosphate and the C-6 proR hydrogen from 5-enolpyruvylshikimate-3-phosphate (EPSP) to yield chorismate, which is the branch point compound that serves as the starting substrate for the three terminal pathways of aromatic amino acid biosynthesis. This reaction introduces a second double bond into the aromatic ring system. The protein is Chorismate synthase of Desulforamulus reducens (strain ATCC BAA-1160 / DSM 100696 / MI-1) (Desulfotomaculum reducens).